A 2220-amino-acid chain; its full sequence is Calcineurin-binding protein cabin-1 (2220 aa).

A phosphoserine mark is found at S10 and S11. T12 bears the Phosphothreonine mark. S20 and S66 each carry phosphoserine. TPR repeat units follow at residues 36–69 (AFAL…SLLR), 90–123 (YSTY…DSTD), and 125–157 (NLWY…NPDH). The tract at residues 361–400 (GAPVGDISGGDKSKKGVKRKKISEESGETAKRRSARVRNT) is disordered. Over residues 382–391 (ISEESGETAK) the composition is skewed to basic and acidic residues. A phosphoserine mark is found at S433 and S450. A TPR 4 repeat occupies 615–648 (VRVYWLKARFLALQGDMEQALENYDICTEMLQSS). S673 bears the Phosphoserine mark. TPR repeat units lie at residues 1055-1088 (NELY…CPNR) and 1106-1139 (KLNS…DSSN). Disordered regions lie at residues 1299 to 1476 (FARG…STPT), 1668 to 1845 (AEGS…RLSR), 1916 to 2165 (AQRQ…GSIS), and 2197 to 2220 (VLET…YMDI). The span at 1301–1324 (RGEEKNTPKASEKEKACLVDEDSH) shows a compositional bias: basic and acidic residues. Low complexity predominate over residues 1327–1349 (AGTLPGPGASLPSSSGPGLTSPP). Over residues 1377 to 1397 (DSTAVALSDSSSTQDFFNEPT) the composition is skewed to polar residues. The segment covering 1402–1412 (GSRKSYTEKRL) has biased composition (basic and acidic residues). A Phosphoserine modification is found at S1439. A compositionally biased stretch (gly residues) spans 1715 to 1725 (SGPGPEPGGKV). Basic and acidic residues-rich tracts occupy residues 1744 to 1753 (SGERKDKESP) and 1784 to 1794 (PARDRGPESRP). The segment covering 1812-1823 (PLTPAQPAPAPA) has biased composition (pro residues). 2 stretches are compositionally biased toward polar residues: residues 1918 to 1927 (RQASGDTPTT) and 1975 to 1989 (TIIT…STLD). The residue at position 1924 (T1924) is a Phosphothreonine. Residues 2070 to 2081 (GKLRPEPRRDGE) show a composition bias toward basic and acidic residues. The segment covering 2091-2112 (PLSSPPTAASSKAPSSGSAQPP) has biased composition (low complexity). The residue at position 2094 (S2094) is a Phosphoserine. The tract at residues 2116–2153 (PGKPEPSRAKSRPLPNMPKLVIPSAATKFPPEITVTPP) is required for interaction with calcineurin. 2 positions are modified to phosphothreonine: T2151 and T2154. Acidic residues predominate over residues 2207–2220 (LESETDEDDDYMDI).

In terms of assembly, component of a complex that includes at least ASF1A, CABIN1, HIRA, histone H3.3 and UBN1. Interacts with calcineurin. Interacts with MEF2B. Activated through PKC-mediated hyperphosphorylation. Phosphorylation by the DNA damage kinases ATM and CHK2 enhances ubiquitination. In terms of processing, upon genotoxic stress, ubiquitination by the DCX(DDB2) E3 ubiquitin-protein ligase complex targets CABIN1 for proteasomal degradation, leading to the release of p53/TP53. Widely expressed in different tissues.

It localises to the nucleus. Its function is as follows. May be required for replication-independent chromatin assembly. May serve as a negative regulator of T-cell receptor (TCR) signaling via inhibition of calcineurin. Inhibition of activated calcineurin is dependent on both PKC and calcium signals. Acts as a negative regulator of p53/TP53 by keeping p53 in an inactive state on chromatin at promoters of a subset of it's target genes. This is Calcineurin-binding protein cabin-1 (CABIN1) from Homo sapiens (Human).